We begin with the raw amino-acid sequence, 83 residues long: uncharacterized protein (83 aa).

Residues 58–80 (YWGYGAAYGISLGLIAGVALAGL) form a helical membrane-spanning segment.

It is found in the membrane. This is an uncharacterized protein from Bacillus subtilis (strain 168).